The chain runs to 69 residues: Protein SlyX homolog (69 aa).

The protein belongs to the SlyX family.

This is Protein SlyX homolog from Maricaulis maris (strain MCS10) (Caulobacter maris).